We begin with the raw amino-acid sequence, 23 residues long: Septenin 2b (23 aa).

In terms of tissue distribution, expressed in skin glands.

It localises to the secreted. May act as an antimicrobial peptide. This chain is Septenin 2b, found in Osteopilus septentrionalis (Cuban treefrog).